The sequence spans 3644 residues: Msx2-interacting protein (3644 aa).

A DNA-binding region spans residues 1–574; the sequence is MVRETRHLWV…DAQAAVKETK (574 aa). The region spanning 6–81 is the RRM 1 domain; sequence RHLWVGNLPE…RDLRTDYNEP (76 aa). The residue at position 99 (Ser-99) is a Phosphoserine. 3 disordered regions span residues 103 to 124, 170 to 209, and 225 to 331; these read EVSGFRGSAGGPAYGPPPSLHA, YRDPRERTLQHGLYYTSRSRSPNRFDAHDPRYEPRAREQF, and TREV…EKDE. Arg-108 carries the omega-N-methylarginine modification. 2 positions are modified to phosphoserine: Ser-188 and Ser-190. Composition is skewed to basic and acidic residues over residues 192-207 and 225-237; these read NRFDAHDPRYEPRARE and TREVRGRRPERSY. A compositionally biased stretch (low complexity) spans 245–310; the sequence is PHSSQSRNQS…TASDDSPARS (66 aa). Ser-310 is modified (phosphoserine). RRM domains lie at 336–416, 439–514, and 518–590; these read FGIK…VGPE, RTLF…FGKS, and NCVW…FANR. Positions 559–575 form a coiled coil; the sequence is LYSEIEDAQAAVKETKG. 2 disordered regions span residues 625 to 673 and 716 to 1413; these read SKHE…SRRD and IREY…ASSF. 2 stretches are compositionally biased toward basic and acidic residues: residues 639–656 and 716–745; these read KCREERRGSYEYSQERTY and IREYSYRQRERERERERFESDRDHERRPIE. Ser-647 carries the phosphoserine modification. Residues Ser-747, Ser-749, Ser-758, and Ser-762 each carry the phosphoserine modification. Positions 765-783 are enriched in basic and acidic residues; it reads HSERLPSDSERRLYRRSSE. The segment covering 784 to 794 has biased composition (low complexity); sequence RSGSCSSVSPP. Ser-792 bears the Phosphoserine mark. Residues 795 to 842 are compositionally biased toward basic and acidic residues; the sequence is RYDKLEKARLERYTKNEKADKERTFDPERVERERRIVRKEKGEKDKAE. Positions 822 to 850 form a coiled coil; that stretch reads ERVERERRIVRKEKGEKDKAERQKRKGKA. Residues Ser-852, Ser-855, and Ser-869 each carry the phosphoserine modification. Composition is skewed to basic and acidic residues over residues 863–894, 904–930, 947–975, and 1009–1071; these read ENDREQSPEKPRGSTKLSRDRADKEGPAKNRL, RVKEKEGKVIEHPPPEKLKARLGRDTT, AKSDPARGKALREKVLPSHAEVGEKEGRT, and LKIE…KLER. A phosphoserine mark is found at Ser-1077 and Ser-1183. Residues 1138-1227 show a composition bias toward basic and acidic residues; it reads GPEKEEVRKN…ERRSLVHEVG (90 aa). Positions 1185-1206 form a coiled coil; sequence RKQMEQSRRKQRMEMEIAKAEK. Phosphoserine occurs at positions 1209, 1237, 1267, 1276, 1283, 1293, 1298, 1302, and 1348. The segment covering 1246–1272 has biased composition (basic and acidic residues); it reads DHVDFDICTKRERNYRSSRQISEDSER. A compositionally biased stretch (basic and acidic residues) spans 1283-1292; that stretch reads SFHDDDDPRG. Residues 1351–1365 show a composition bias toward basic and acidic residues; that stretch reads EPSRWDPPMKQDPSR. Ser-1395 and Ser-1397 each carry phosphoserine. 2 positions are modified to phosphothreonine: Thr-1454 and Thr-1456. 2 disordered regions span residues 1494-1538 and 1557-2447; these read DKEK…QERQ and RLQH…ARFK. Positions 1509 to 1544 form a coiled coil; the sequence is YMKKKKIRTDSEGKLDDKKDERREEEQERQELFASR. Basic and acidic residues-rich tracts occupy residues 1516 to 1538 and 1557 to 1567; these read RTDSEGKLDDKKDERREEEQERQ and RLQHLERKSEE. Polar residues predominate over residues 1582–1591; it reads EGANSTSDSV. Residues 1601–1646 are compositionally biased toward basic and acidic residues; that stretch reads RFMELTRMQQKEKEKDQKPKEAEKQEEPETHPKTPEPAAETKEPEP. Positions 1607–1627 form a coiled coil; it reads RMQQKEKEKDQKPKEAEKQEE. Thr-1634 is modified (phosphothreonine). The segment covering 1701 to 1710 has biased composition (low complexity); the sequence is VSEPVSVPVE. Polar residues predominate over residues 1756-1765; sequence PGTTVSQVES. Residues 1782–1796 are compositionally biased toward basic and acidic residues; that stretch reads QRSEEAEEGKVEKPD. The span at 1797–1810 shows a compositional bias: polar residues; sequence TTPSTEPDATQNAG. Thr-1844 is subject to Phosphothreonine. 2 stretches are compositionally biased toward basic and acidic residues: residues 1857 to 1871 and 1879 to 1894; these read PVTRKSERIDREKLK and EAQKLLELKMEAEKIT. Phosphoserine occurs at positions 1915 and 1936. The segment covering 1930–1943 has biased composition (basic and acidic residues); it reads TDHESRSPAKEPVE. Thr-1965 carries the post-translational modification Phosphothreonine. Basic residues predominate over residues 1967–1976; that stretch reads RRGRPPKTRR. 4 stretches are compositionally biased toward basic and acidic residues: residues 1977 to 1991, 2039 to 2066, 2074 to 2084, and 2097 to 2106; these read RAEEDGEHERKEPAE, GNPKSRGEREAASEPKRDRRDPSTDKSG, VLERKPPEKTY, and GMDRAAHQRS. Phosphoserine occurs at positions 2128 and 2134. A compositionally biased stretch (polar residues) spans 2129–2147; it reads PQESESPQKGSGSSPQLAN. The interaction with MSX2 stretch occupies residues 2138–2462; that stretch reads GSGSSPQLAN…ESDPVTPPSD (325 aa). Thr-2171 is modified (phosphothreonine). Low complexity-rich tracts occupy residues 2191–2212 and 2231–2242; these read EPSAAAASKGTATATATAASEE and AAAIGSIISDAS. The 489-residue stretch at 2216–2704 folds into the RID domain; sequence EHGHKPAHQA…NVLTGPVNVL (489 aa). Positions 2261–2274 are enriched in basic and acidic residues; sequence HPREGMEPGLHEAE. The segment covering 2281-2290 has biased composition (polar residues); it reads GTATESSAPQ. The span at 2318–2329 shows a compositional bias: basic and acidic residues; the sequence is KGSKAEVTPPRK. The segment covering 2330-2345 has biased composition (basic residues); that stretch reads DKGRQKTTRRRKRNAN. The segment covering 2359-2379 has biased composition (low complexity); sequence AEQTQSESPAAEEATAATPEA. At Ser-2366 the chain carries Phosphoserine. Thr-2419 bears the Phosphothreonine mark. A phosphoserine mark is found at Ser-2450 and Ser-2454. Disordered regions lie at residues 2453–2472, 2481–2528, 2745–2781, and 2829–2849; these read ESDPVTPPSDSGIPPPTIPL, PVIP…MDTS, AAKGKQRASSNENSRFHPGSMSVIDDRPADTGSGAGL, and SQVKADSITPTQSAPKGPQTP. Thr-2458 is subject to Phosphothreonine. Position 2491 is a phosphoserine (Ser-2491). The interaction with RBPSUH stretch occupies residues 2706–2845; that stretch reads TPVSATVGTV…ITPTQSAPKG (140 aa). Residues Thr-2913 and Thr-2925 each carry the phosphothreonine modification. Positions 2974–3023 are disordered; that stretch reads NHVPSGPSTPADRTIAHLATPKPDTHSPRPTGPTPGLFPRPCHPSSTTST. Pro residues predominate over residues 3003–3015; it reads PTGPTPGLFPRPC. Asymmetric dimethylarginine occurs at positions 3088 and 3096. Positions 3310 to 3473 are disordered; that stretch reads RTKTSAQVPP…QESSPHGTPQ (164 aa). Residues 3323 to 3340 are compositionally biased toward low complexity; the sequence is PLQSTQSAQPAPSTQATQ. Over residues 3366–3379 the composition is skewed to polar residues; that stretch reads QVSQEAKGTQTGGV. Ser-3413 carries the post-translational modification Phosphoserine. In terms of domain architecture, SPOC spans 3478–3644; the sequence is MVQLLKKYPI…PHLMIVIASV (167 aa).

The protein belongs to the RRM Spen family. As to quaternary structure, interacts with NCOR2, HDAC1, HDAC2, RBBP4, MBD3 and MTA1L1. Interacts with the nuclear receptors RAR and PPARD. Interacts with RAR in absence of ligand. Binds to the steroid receptor RNA coactivator SRA. Interacts with MSX2. Interacts with RBPSUH; this interaction may prevent the interaction between RBPSUH and NOTCH1. Binds to HIPK3. As to expression, highly expressed in testis. Expressed at lower level in brain, lung, spleen, liver and kidney. Weakly expressed in cardiac and skeletal muscles and ovary. In spleen, it is expressed in follicular B-cells, while it is weakly expressed in marginal zone B-cells.

Its subcellular location is the nucleus. Its function is as follows. May serve as a nuclear matrix platform that organizes and integrates transcriptional responses. In osteoblasts, supports transcription activation: synergizes with RUNX2 to enhance FGFR2-mediated activation of the osteocalcin FGF-responsive element (OCFRE). Has also been shown to be an essential corepressor protein, which probably regulates different key pathways, such as the Notch pathway. Negative regulator of the Notch pathway via its interaction with RBPSUH, which prevents the association between NOTCH1 and RBPSUH, and therefore suppresses the transactivation activity of Notch signaling. Blocks the differentiation of precursor B-cells into marginal zone B-cells. Probably represses transcription via the recruitment of large complexes containing histone deacetylase proteins. May bind both to DNA and RNA. This is Msx2-interacting protein (Spen) from Mus musculus (Mouse).